The sequence spans 204 residues: MTAEAPPDDDIIEPEMLLRAYATGIFPMAEEADDPEVFWVRPEKRGVIPLDGFHIPRSLQKTIRQGIFKIRLDSNFAGVIEGCASGTGERARTWINEPIRRAYAKLFEIGHCHTVEAWYEGKLAGGLYGVTLGRAFFGESMFTRKRDASKVCLAYLVQHLSRQGFVLLDTQFTTPHLERFGALEVPRKEYEEMLERALEGIARF.

The protein belongs to the L/F-transferase family.

It localises to the cytoplasm. It carries out the reaction N-terminal L-lysyl-[protein] + L-leucyl-tRNA(Leu) = N-terminal L-leucyl-L-lysyl-[protein] + tRNA(Leu) + H(+). It catalyses the reaction N-terminal L-arginyl-[protein] + L-leucyl-tRNA(Leu) = N-terminal L-leucyl-L-arginyl-[protein] + tRNA(Leu) + H(+). The catalysed reaction is L-phenylalanyl-tRNA(Phe) + an N-terminal L-alpha-aminoacyl-[protein] = an N-terminal L-phenylalanyl-L-alpha-aminoacyl-[protein] + tRNA(Phe). Functions in the N-end rule pathway of protein degradation where it conjugates Leu, Phe and, less efficiently, Met from aminoacyl-tRNAs to the N-termini of proteins containing an N-terminal arginine or lysine. The polypeptide is Leucyl/phenylalanyl-tRNA--protein transferase (Brucella abortus (strain 2308)).